We begin with the raw amino-acid sequence, 319 residues long: MKPENKLPVLDLISAEMKTVVNTLQPDLPSWPATGTIAEQRQYYTLERRFWNAGAPEMATRAYMVPTKYGQVETRLFCPQPDSPATLFYLHGGGFILGNLDTHDRIMRLLASYSQCTVIGIDYPLSPEARFPQAIEEIVAACCYFHQQAEDYQINMSRIGFAGDSAGAMLALASALWLRDKQIDCGKIVGVLLWYGLYGLRDSVTRRLLGGVWDGLTQQDLQMYEEAYLSNDADRESPYYCLFNNDLTREVPPCFIAGAEFDPLLDDSRLLYQTLAAHQQPCEFKLYPGTLHAFLHYSRMMKTADEALRDGAQFFTAQL.

Positions 91-93 (HGG) match the Involved in the stabilization of the negatively charged intermediate by the formation of the oxyanion hole motif. Active-site residues include serine 165, aspartate 262, and histidine 292.

It belongs to the 'GDXG' lipolytic enzyme family. As to quaternary structure, homodimer. Interacts with MalT and MelA.

The protein localises to the cytoplasm. Functionally, displays esterase activity towards short chain fatty esters (acyl chain length of up to 8 carbons). Able to hydrolyze triacetylglycerol (triacetin) and tributyrylglycerol (tributyrin), but not trioleylglycerol (triolein) or cholesterol oleate. Negatively regulates MalT activity by antagonizing maltotriose binding. Inhibits MelA galactosidase activity. This Shigella boydii serotype 4 (strain Sb227) protein is Acetyl esterase.